A 247-amino-acid chain; its full sequence is Ribonuclease 3 (247 aa).

Residues 21 to 149 (FKKLSKKIGI…LVGAIYLDRG (129 aa)) form the RNase III domain. Glutamate 62 contacts Mg(2+). Residue aspartate 66 is part of the active site. Mg(2+)-binding residues include asparagine 135 and glutamate 138. The active site involves glutamate 138. The DRBM domain maps to 176-245 (DYKTQLQEYS…AKELYIRIRR (70 aa)).

The protein belongs to the ribonuclease III family. As to quaternary structure, homodimer. The cofactor is Mg(2+).

It is found in the cytoplasm. The enzyme catalyses Endonucleolytic cleavage to 5'-phosphomonoester.. Digests double-stranded RNA. Involved in the processing of primary rRNA transcript to yield the immediate precursors to the large and small rRNAs (23S and 16S). Processes some mRNAs, and tRNAs when they are encoded in the rRNA operon. Processes pre-crRNA and tracrRNA of type II CRISPR loci if present in the organism. The chain is Ribonuclease 3 from Leptospira borgpetersenii serovar Hardjo-bovis (strain L550).